The primary structure comprises 698 residues: MVNFGKKLMADQIPEWKGYYINYKLMKKKVKQYGQQVQQGEKDRRRVLKDFSKMLDDQIEKIVLFLLEQQGALASRIEKLGKQRAILAEQPDISAIAELREAYREVGLDLIKLLKFVDLNATGIRKILKKFDKRFGYRFTDYYVTSRSNHPYSQLQQVFKHVGVGAVVGALSRNLADLQERQGSYLSIYDQPSTALKDPIIDMINSSVDKLTRSTNFLRFLGQHALIVGEESPSTAEEEEIEDQKYHFMSLMLNLVNTFLYMVNTYIIVPTADDYSVSLGAASTVCGVVIGSMAVAQIFSSVYFSAWSNKSYFRPLIFSSIVLFLGNVCYAMAYDMKSLTVLIIGRLLCGMGSARAVNRRYISDCVPARIRMQASAGFVSASALGMACGPALAGLLQWKFKIYMVTFNQSTLPGWVMAVAWLLYLVWLWISFKEPNRATEVNGTQQNPASVQRADIEQLENGLAQPLLRDSSKKDEDDDEEVDDSEEGTHDSRKPATSIGSAYRLLTPSVKVQLLIYFMLKYAMEILLSESSVITNHYFNWNTSAVAIFLAILGLTVLPVNAVVGTYISNMFEDRQLLMVSQITLLVGIIFSFKITSTYSVVQYVVSALVTFVSAEVLEGVNLSLLSSVMSSRLSRGTYNGGLLSTEAGTLARVVADCTITAAGYLGIGKLLNVTLLPSLVICAASIASTFLTYNSLF.

The region spanning 2–145 (VNFGKKLMAD…GYRFTDYYVT (144 aa)) is the SPX domain. Transmembrane regions (helical) follow at residues 248–268 (FMSL…TYII), 279–299 (LGAA…AQIF), 316–336 (LIFS…AYDM), 339–357 (LTVL…ARAV), 376–396 (AGFV…AGLL), and 412–432 (LPGW…WISF). Residues 467–495 (LLRDSSKKDEDDDEEVDDSEEGTHDSRKP) form a disordered region. Residues 476–486 (EDDDEEVDDSE) show a composition bias toward acidic residues. Helical transmembrane passes span 514 to 534 (LLIY…SSVI), 545 to 565 (AVAI…AVVG), 577 to 597 (LLMV…KITS), 605 to 625 (VVSA…NLSL), and 671 to 691 (LLNV…ASTF).

It belongs to the major facilitator superfamily.

The protein localises to the membrane. This Oryza sativa subsp. indica (Rice) protein is SPX domain-containing membrane protein OsI_21475.